A 599-amino-acid chain; its full sequence is MLTRKPSAAAPAAYPTGRGGDTAVRQLQASPGIGAGAPRSGVGTGPPSPIALPPLRASNATTTAHTIGGSKHTMNDHLHLNSHGQIQVQQLFEDNSNKRTVLTTQPNGLTTVGKTGLPGVPERQLESIHRRQGSSTSLKSMEGMGKVKASPMTPEQAMKQYMQKLTAFEHHEIFSYPEIYFLGPNAKKRQGMTGGPNNGGYDDDQGSYVQVPHDHVAYRYEVLKVIGKGSFGQVVKAYDHKVHQHVALKMVRNEKRFHRQAAEEIRILEHLRKQDKDNTMNVIHMLENFTFRNHICMTFELLSMNLYELIKKNKFQGFSLPLVRKFAHSILQCLDALHKNRIIHCDLKPENILLKQQGRSSIKVIDFGSSCYEHQRVYTYIQSRFYRAPEVILGARYGMPIDMWSLGCILAELLTGYPLLPGEDEGDQLACMIELLGMPSQKLLDASKRAKNFVSSKGYPRYCTVTTLSDGSVVLNGGRSRRGKLRGPPESREWGNALKGCDDPLFLDFLKQCLEWDPAVRMTPGQALRHPWLRRRLPKPPTGEKTAVKRVTESTGAITSISKLPPPSSSASKLRTNLAQMTDANGNIQQRTVLPKLVS.

Residues methionine 1–leucine 55 are disordered. Phosphoserine is present on serine 30. Threonine 104 is subject to Phosphothreonine; by ATM. The Nuclear localization signal signature appears at lysine 187–arginine 189. In terms of domain architecture, Protein kinase spans tyrosine 220 to leucine 533. ATP-binding positions include isoleucine 226–valine 234, lysine 249, and phenylalanine 299–leucine 302. The active-site Proton acceptor is the aspartate 346. Position 379 is a phosphothreonine; by MAP3K10 (threonine 379). A Phosphotyrosine; by autocatalysis modification is found at tyrosine 380. Serine 440 is modified (phosphoserine; by ATM). At serine 447 the chain carries Phosphoserine; by MAP3K10.

It belongs to the protein kinase superfamily. CMGC Ser/Thr protein kinase family. MNB/DYRK subfamily. In terms of assembly, component of an E3 ligase complex containing DYRK2, EDD/UBR5, DDB1 and DCAF1 (EDVP complex). Interacts directly with EDD/UBR5, DDB1 and DCAF1. Interacts with SIAH2 and MDM2. Interacts with MAP3K10 and NFATC1. May also interact with CCNL2. Mg(2+) is required as a cofactor. Mn(2+) serves as cofactor. Autophosphorylates cotranslationally on the second tyrosine residue in the Tyr-X-Tyr motif in the activation loop, but once mature, does not have any protein tyrosine kinase activity. Phosphorylated at Thr-104 and Ser-440 by ATM in response to genotoxic stress. In terms of processing, under normal conditions, polyubiquitinated in the nucleus by MDM2, leading to its proteasomal degradation. Phosphorylation on Thr-104 and Ser-440 by ATM in response to genotoxic stress disrupts MDM2 binding and prevents MDM2-mediated ubiquitination and subsequent proteasomal degradation. Polyubiquitinated by SIAH2, leading to its proteasomal degradation. Polyubiquitinated by SIAH2 occurs under normal conditions, and is enhanced in response to hypoxia.

Its subcellular location is the cytoplasm. The protein localises to the nucleus. It catalyses the reaction L-seryl-[protein] + ATP = O-phospho-L-seryl-[protein] + ADP + H(+). The catalysed reaction is L-threonyl-[protein] + ATP = O-phospho-L-threonyl-[protein] + ADP + H(+). The enzyme catalyses L-tyrosyl-[protein] + ATP = O-phospho-L-tyrosyl-[protein] + ADP + H(+). With respect to regulation, activated by autophosphorylation on the second tyrosine residue in the Tyr-X-Tyr motif in the activation loop. Serine/threonine-protein kinase involved in the regulation of the mitotic cell cycle, cell proliferation, apoptosis, organization of the cytoskeleton and neurite outgrowth. Functions in part via its role in ubiquitin-dependent proteasomal protein degradation. Functions downstream of ATM and phosphorylates p53/TP53 at 'Ser-46', and thereby contributes to the induction of apoptosis in response to DNA damage. Phosphorylates NFATC1, and thereby inhibits its accumulation in the nucleus and its transcription factor activity. Phosphorylates EIF2B5 at 'Ser-544', enabling its subsequent phosphorylation and inhibition by GSK3B. Likewise, phosphorylation of NFATC1, CRMP2/DPYSL2 and CRMP4/DPYSL3 promotes their subsequent phosphorylation by GSK3B. May play a general role in the priming of GSK3 substrates. Inactivates GYS1 by phosphorylation at 'Ser-641', and potentially also a second phosphorylation site, thus regulating glycogen synthesis. Mediates EDVP E3 ligase complex formation and is required for the phosphorylation and subsequent degradation of KATNA1. Phosphorylates TERT at 'Ser-457', promoting TERT ubiquitination by the EDVP complex. Phosphorylates SIAH2, and thereby increases its ubiquitin ligase activity. Promotes the proteasomal degradation of MYC and JUN, and thereby regulates progress through the mitotic cell cycle and cell proliferation. Promotes proteasomal degradation of GLI2 and GLI3, and thereby plays a role in smoothened and sonic hedgehog signaling. Phosphorylates CRMP2/DPYSL2, CRMP4/DPYSL3, DCX, EIF2B5, EIF4EBP1, GLI2, GLI3, GYS1, JUN, MDM2, MYC, NFATC1, p53/TP53, TAU/MAPT and KATNA1. Can phosphorylate histone H1, histone H3 and histone H2B (in vitro). Can phosphorylate CARHSP1 (in vitro). Plays a role in cytoskeleton organization and neurite outgrowth via its phosphorylation of DCX. The protein is Dual specificity tyrosine-phosphorylation-regulated kinase 2 of Mus musculus (Mouse).